Reading from the N-terminus, the 283-residue chain is Mau operon transcriptional activator (283 aa).

One can recognise an HTH lysR-type domain in the interval 1 to 58; sequence MNWDDLRVVAAINRCGSFNRAAKMLNVEETTIARRLARLEGSLGCVLFQAVDGQRRPT. Residues 18-37 constitute a DNA-binding region (H-T-H motif); the sequence is FNRAAKMLNVEETTIARRLA.

The protein belongs to the LysR transcriptional regulatory family.

Transcriptional activator of the mau genes involved in methylamine metabolism. This chain is Mau operon transcriptional activator (mauR), found in Paracoccus denitrificans.